The sequence spans 462 residues: UDP-N-acetylmuramoylalanine--D-glutamate ligase (462 aa).

125-131 contributes to the ATP binding site; it reads GSDGKTT.

The protein belongs to the MurCDEF family.

The protein localises to the cytoplasm. It catalyses the reaction UDP-N-acetyl-alpha-D-muramoyl-L-alanine + D-glutamate + ATP = UDP-N-acetyl-alpha-D-muramoyl-L-alanyl-D-glutamate + ADP + phosphate + H(+). It participates in cell wall biogenesis; peptidoglycan biosynthesis. Its function is as follows. Cell wall formation. Catalyzes the addition of glutamate to the nucleotide precursor UDP-N-acetylmuramoyl-L-alanine (UMA). This chain is UDP-N-acetylmuramoylalanine--D-glutamate ligase, found in Clostridium acetobutylicum (strain ATCC 824 / DSM 792 / JCM 1419 / IAM 19013 / LMG 5710 / NBRC 13948 / NRRL B-527 / VKM B-1787 / 2291 / W).